A 279-amino-acid chain; its full sequence is Putative pyruvate, phosphate dikinase regulatory protein (279 aa).

Position 153–160 (153–160 (GISRTSKT)) interacts with ADP.

The protein belongs to the pyruvate, phosphate/water dikinase regulatory protein family. PDRP subfamily.

The enzyme catalyses N(tele)-phospho-L-histidyl/L-threonyl-[pyruvate, phosphate dikinase] + ADP = N(tele)-phospho-L-histidyl/O-phospho-L-threonyl-[pyruvate, phosphate dikinase] + AMP + H(+). It catalyses the reaction N(tele)-phospho-L-histidyl/O-phospho-L-threonyl-[pyruvate, phosphate dikinase] + phosphate + H(+) = N(tele)-phospho-L-histidyl/L-threonyl-[pyruvate, phosphate dikinase] + diphosphate. Its function is as follows. Bifunctional serine/threonine kinase and phosphorylase involved in the regulation of the pyruvate, phosphate dikinase (PPDK) by catalyzing its phosphorylation/dephosphorylation. The protein is Putative pyruvate, phosphate dikinase regulatory protein of Bartonella bacilliformis (strain ATCC 35685 / KC583 / Herrer 020/F12,63).